Reading from the N-terminus, the 812-residue chain is Phenylalanine--tRNA ligase beta subunit (812 aa).

The region spanning 39–155 (SKTFAPFTIA…ADAPVGAGYA (117 aa)) is the tRNA-binding domain. Residues 405–480 (PEDRVIDFPL…RIVGVDKVPM (76 aa)) form the B5 domain. Mg(2+) contacts are provided by Asp-458, Asp-464, Glu-467, and Glu-468. Positions 718–811 (PAFQPVSRDF…VAKRTGGSLR (94 aa)) constitute an FDX-ACB domain.

It belongs to the phenylalanyl-tRNA synthetase beta subunit family. Type 1 subfamily. Tetramer of two alpha and two beta subunits. It depends on Mg(2+) as a cofactor.

It is found in the cytoplasm. It catalyses the reaction tRNA(Phe) + L-phenylalanine + ATP = L-phenylalanyl-tRNA(Phe) + AMP + diphosphate + H(+). The sequence is that of Phenylalanine--tRNA ligase beta subunit from Nitrobacter winogradskyi (strain ATCC 25391 / DSM 10237 / CIP 104748 / NCIMB 11846 / Nb-255).